A 143-amino-acid chain; its full sequence is MNKTITPSLETIERNWFLVDAKDKTLGRLATEIATVLRGKNKPTFTPHLDTGDFVIVVNAEKVEVTGKKASQKLYRRHSGRPGGMKIEKFESLQERIPERIIEQAVKGMLPHNSLGRQQFKKLKVYKGADHPHAAQNPVLLNS.

Belongs to the universal ribosomal protein uL13 family. Part of the 50S ribosomal subunit.

In terms of biological role, this protein is one of the early assembly proteins of the 50S ribosomal subunit, although it is not seen to bind rRNA by itself. It is important during the early stages of 50S assembly. This Prochlorococcus marinus (strain MIT 9301) protein is Large ribosomal subunit protein uL13.